Reading from the N-terminus, the 784-residue chain is Ribosome biogenesis protein BOP1 homolog (784 aa).

Residues 1–11 (MTKKLALKRKG) are compositionally biased toward basic residues. Positions 1–159 (MTKKLALKRK…DSDTSDEEDI (159 aa)) are disordered. Composition is skewed to acidic residues over residues 27–36 (SENEEEEEDL), 45–54 (EDSTDDEGID), 62–73 (SEELQFESDEEG), and 84–111 (AEED…EDEE). The span at 112-123 (KDSKLKQSDDKP) shows a compositional bias: basic and acidic residues. Low complexity predominate over residues 124–133 (SSSGAASKKA). Residues 138–148 (LSKRDTSKPEY) are compositionally biased toward basic and acidic residues. The span at 149-158 (QDSDTSDEED) shows a compositional bias: acidic residues. 7 WD repeats span residues 445-486 (GHTD…RTIE), 488-526 (DEVV…KVLV), 570-612 (THFK…SQIP), 615-653 (KSKG…LVKK), 656-695 (TNSK…KPYQ), 699-738 (LHRN…DLLQ), and 754-784 (RDEF…RLYT).

This sequence belongs to the WD repeat BOP1/ERB1 family.

The protein localises to the nucleus. Its subcellular location is the nucleolus. It is found in the nucleoplasm. Functionally, required for maturation of ribosomal RNAs and formation of the large ribosomal subunit. The sequence is that of Ribosome biogenesis protein BOP1 homolog from Drosophila erecta (Fruit fly).